We begin with the raw amino-acid sequence, 275 residues long: Large ribosomal subunit protein uL2 (275 aa).

2 disordered regions span residues Gly-36–Gly-55 and Val-224–Lys-263.

This sequence belongs to the universal ribosomal protein uL2 family. Part of the 50S ribosomal subunit. Forms a bridge to the 30S subunit in the 70S ribosome.

Functionally, one of the primary rRNA binding proteins. Required for association of the 30S and 50S subunits to form the 70S ribosome, for tRNA binding and peptide bond formation. It has been suggested to have peptidyltransferase activity; this is somewhat controversial. Makes several contacts with the 16S rRNA in the 70S ribosome. In Rhodospirillum centenum (strain ATCC 51521 / SW), this protein is Large ribosomal subunit protein uL2.